The sequence spans 249 residues: Putative TrmH family tRNA/rRNA methyltransferase (249 aa).

Positions 196, 216, and 225 each coordinate S-adenosyl-L-methionine.

It belongs to the class IV-like SAM-binding methyltransferase superfamily. RNA methyltransferase TrmH family.

This chain is Putative TrmH family tRNA/rRNA methyltransferase, found in Staphylococcus haemolyticus (strain JCSC1435).